The primary structure comprises 498 residues: ATP synthase subunit beta, chloroplastic (498 aa).

172–179 (GGAGVGKT) serves as a coordination point for ATP.

It belongs to the ATPase alpha/beta chains family. As to quaternary structure, F-type ATPases have 2 components, CF(1) - the catalytic core - and CF(0) - the membrane proton channel. CF(1) has five subunits: alpha(3), beta(3), gamma(1), delta(1), epsilon(1). CF(0) has four main subunits: a(1), b(1), b'(1) and c(9-12).

The protein resides in the plastid. Its subcellular location is the chloroplast thylakoid membrane. It carries out the reaction ATP + H2O + 4 H(+)(in) = ADP + phosphate + 5 H(+)(out). Produces ATP from ADP in the presence of a proton gradient across the membrane. The catalytic sites are hosted primarily by the beta subunits. The polypeptide is ATP synthase subunit beta, chloroplastic (Triticum aestivum (Wheat)).